The primary structure comprises 275 residues: EFALMVNDFEILKSYLDEGANGIESDITFSDEGEPEYTFHGVPCDCRRWCDRSVGIGEYLQHLSDLTTPGNPKFRENLLVVVLDLKLNGLSQDALRQGGLRLADKLAAHYWTGNRKARAYFIISVPKTSESEFMRTFRKELDEINFGDMSAKIGFDFTDNGDFKETQKVYEGLGISEHIWASDGITNCIPLLLRGTDRLEDLTRQRDEPGYKYIDKVYAWTYDKETSVVKALELGVDGVMTNYADFVIKVLNKPEHSSKYRLATYDDNPFEKFTA.

Residues glutamate 24 and aspartate 26 each contribute to the Mg(2+) site. Residue histidine 40 is the Nucleophile of the active site. 2 disulfide bridges follow: cysteine 44-cysteine 50 and cysteine 46-cysteine 188. Residue aspartate 84 coordinates Mg(2+).

The protein belongs to the arthropod phospholipase D family. Class II subfamily. Mg(2+) serves as cofactor. As to expression, expressed by the venom gland.

Its subcellular location is the secreted. The enzyme catalyses an N-(acyl)-sphingosylphosphocholine = an N-(acyl)-sphingosyl-1,3-cyclic phosphate + choline. It carries out the reaction an N-(acyl)-sphingosylphosphoethanolamine = an N-(acyl)-sphingosyl-1,3-cyclic phosphate + ethanolamine. It catalyses the reaction a 1-acyl-sn-glycero-3-phosphocholine = a 1-acyl-sn-glycero-2,3-cyclic phosphate + choline. The catalysed reaction is a 1-acyl-sn-glycero-3-phosphoethanolamine = a 1-acyl-sn-glycero-2,3-cyclic phosphate + ethanolamine. Its function is as follows. Dermonecrotic toxins cleave the phosphodiester linkage between the phosphate and headgroup of certain phospholipids (sphingolipid and lysolipid substrates), forming an alcohol (often choline) and a cyclic phosphate. This toxin acts on sphingomyelin (SM). It may also act on ceramide phosphoethanolamine (CPE), lysophosphatidylcholine (LPC) and lysophosphatidylethanolamine (LPE), but not on lysophosphatidylserine (LPS), and lysophosphatidylglycerol (LPG). It acts by transphosphatidylation, releasing exclusively cyclic phosphate products as second products. Induces dermonecrosis, hemolysis, increased vascular permeability, edema, inflammatory response, and platelet aggregation. This Loxosceles spinulosa (Recluse spider) protein is Dermonecrotic toxin LspiSicTox-betaIE4i.